Reading from the N-terminus, the 409-residue chain is Pentatricopeptide repeat-containing protein At5g09450, mitochondrial (409 aa).

The N-terminal 38 residues, 1 to 38 (MATRSLFHSLRCRLTNNGVLGSNFIRNAESSRFSKSYN), are a transit peptide targeting the mitochondrion. PPR repeat units lie at residues 155–189 (TAET…DSLT), 191–225 (GAIT…KVSP), 226–256 (DIFT…MRHD), 262–296 (GWVR…SISQ), 298–332 (EWIT…NQIL), and 333–367 (SSRS…KTTE).

This sequence belongs to the PPR family. P subfamily.

The protein localises to the mitochondrion. The chain is Pentatricopeptide repeat-containing protein At5g09450, mitochondrial from Arabidopsis thaliana (Mouse-ear cress).